A 96-amino-acid polypeptide reads, in one-letter code: Non-specific lipid-transfer protein 2 (96 aa).

An N-terminal signal peptide occupies residues 1 to 27; it reads MMRRLAVLVLAVAMVAACGGGVVGVAG. 4 disulfide bridges follow: Cys30/Cys62, Cys38/Cys52, Cys53/Cys88, and Cys64/Cys95.

Belongs to the plant LTP family. B11E subfamily.

Functionally, transfer lipids across membranes. May play a role in plant defense or in the biosynthesis of cuticle layers. The protein is Non-specific lipid-transfer protein 2 (LTP-2) of Oryza sativa subsp. indica (Rice).